The sequence spans 1142 residues: Serine/threonine-protein kinase dst2 (1142 aa).

Residues 20–276 (FELIEEIAEG…ATELLKHPFV (257 aa)) form the Protein kinase domain. ATP contacts are provided by residues 26–34 (IAEGSFGTV) and lysine 49. Aspartate 141 acts as the Proton acceptor in catalysis. Over residues 300–322 (LEEGGDEDEDSSEQEGMDSDDKD) the composition is skewed to acidic residues. Disordered regions lie at residues 300–492 (LEEG…KTLE), 515–636 (KKQQ…KSTP), 744–768 (ETNH…TEQR), 939–974 (SIEE…GSVT), and 1040–1142 (EEQK…DNQD). A compositionally biased stretch (basic and acidic residues) spans 323 to 336 (SDLKKSVGTSDRKS). The span at 355-365 (QRKSTGQNLQL) shows a compositional bias: polar residues. The span at 371–390 (QQSSSSSSSSSSSLSSQSLQ) shows a compositional bias: low complexity. Polar residues predominate over residues 391-413 (PQAVNKSTDRLSANINGSNTKSN). Residues 421 to 452 (AAASASASSLNLSTGNLQQSLSGSGSITTNSG) are compositionally biased toward low complexity. The span at 467–477 (SSDDRSPDIRT) shows a compositional bias: basic and acidic residues. A compositionally biased stretch (low complexity) spans 541–554 (KQNAAKATQQQKQS). Basic and acidic residues-rich tracts occupy residues 555–588 (AAKE…KKNQ), 597–635 (KVTD…DKST), 744–760 (ETNH…EQHI), and 939–969 (SIEE…EQKK). The stretch at 716 to 1050 (QEYHTVLREN…EQKKSKLKLK (335 aa)) forms a coiled coil. A compositionally biased stretch (low complexity) spans 1068–1091 (TGTTPPSTSSNQKTLNNSNGASSN).

It belongs to the protein kinase superfamily. STE Ser/Thr protein kinase family. STE20 subfamily. Mg(2+) is required as a cofactor.

It catalyses the reaction L-seryl-[protein] + ATP = O-phospho-L-seryl-[protein] + ADP + H(+). The enzyme catalyses L-threonyl-[protein] + ATP = O-phospho-L-threonyl-[protein] + ADP + H(+). The sequence is that of Serine/threonine-protein kinase dst2 from Dictyostelium discoideum (Social amoeba).